A 377-amino-acid chain; its full sequence is Serine protease grass (377 aa).

The N-terminal stretch at 1–26 is a signal peptide; the sequence is MMIASSLAVLYGIAIVSSMGVQSARA. Residues 31-89 enclose the Clip domain; sequence DCTTPDGDQGQCMPFSSCRTIEERLTEAQKAGQKVPADYASYLQKALCGEFNGVRHFCC. 6 disulfides stabilise this stretch: Cys-32/Cys-88, Cys-42/Cys-78, Cys-48/Cys-89, Cys-111/Cys-243, Cys-148/Cys-164, and Cys-188/Cys-197. The interval 91–118 is linker; it reads SANIQHNSKVMSLFKDENFDCGNFLSQR. Positions 119-373 constitute a Peptidase S1 domain; sequence VSNGYEVKLS…YVQWITDTMA (255 aa). The active-site Charge relay system is His-163. 4 residues coordinate Ca(2+): Glu-179, Arg-181, Thr-184, and Asp-187. Asp-223 (charge relay system) is an active-site residue. 2 N-linked (GlcNAc...) asparagine glycosylation sites follow: Asn-230 and Asn-270. Intrachain disulfides connect Cys-290-Cys-304 and Cys-314-Cys-349. Ser-318 functions as the Charge relay system in the catalytic mechanism.

It belongs to the peptidase S1 family. CLIP subfamily. In terms of processing, proteolytically cleaved by a tryspin-like protease which is likely to activate grass.

Its subcellular location is the secreted. Its function is as follows. Endopeptidase. Plays a key role in innate immunity by activating the Toll pathway in response to fungal and Gram-positive bacterial infections, presumably downstream of pattern-recognition receptors (PRR), such as PGRP-SA, GNBP1 and GNBP3, and upstream of spz processing enzyme SPE. The protein is Serine protease grass of Drosophila melanogaster (Fruit fly).